A 290-amino-acid polypeptide reads, in one-letter code: Xyloglucan endotransglycosylase/hydrolase protein 8 (290 aa).

An N-terminal signal peptide occupies residues 1 to 25; the sequence is MAKHLALSVAAAVAVSWLAASSAAA. The GH16 domain occupies 26 to 218; sequence AGFYEKFDVV…WSGAPFVVSY (193 aa). The active-site Nucleophile is the glutamate 106. The active-site Proton donor is glutamate 110. Glutamate 110 is a xyloglucan binding site. N-linked (GlcNAc...) asparagine glycosylation is present at asparagine 114. Xyloglucan contacts are provided by residues 123-125, 133-135, and 197-198; these read NTN, KKE, and YW. 2 cysteine pairs are disulfide-bonded: cysteine 226-cysteine 240 and cysteine 273-cysteine 287. Xyloglucan is bound at residue arginine 278.

The protein belongs to the glycosyl hydrolase 16 family. XTH group 2 subfamily. Post-translationally, contains at least one intrachain disulfide bond essential for its enzymatic activity. Transcript strongly detected in leaf sheaths. Weakly or not expressed in leaf blades, roots and calli. Accumulation of transcript detected in shoot apex meristem, vascular tissues, young leaves, vascular bundles of leaf sheaths, and peripheral cylinder of the vascular bundles and fibers in the nodal region.

Its subcellular location is the secreted. The protein resides in the cell wall. The protein localises to the extracellular space. It is found in the apoplast. The catalysed reaction is breaks a beta-(1-&gt;4) bond in the backbone of a xyloglucan and transfers the xyloglucanyl segment on to O-4 of the non-reducing terminal glucose residue of an acceptor, which can be a xyloglucan or an oligosaccharide of xyloglucan.. Its function is as follows. Catalyzes xyloglucan endohydrolysis (XEH) and/or endotransglycosylation (XET). Cleaves and religates xyloglucan polymers, an essential constituent of the primary cell wall, and thereby participates in cell wall construction of growing tissues. May promote elongation of three internodes (II, III and IV) and may be involved in cell elongation processes. This is Xyloglucan endotransglycosylase/hydrolase protein 8 (XTH8) from Oryza sativa subsp. japonica (Rice).